Reading from the N-terminus, the 234-residue chain is Glucosamine-6-phosphate deaminase (234 aa).

The Proton acceptor; for enolization step role is filled by D63. N129 acts as the For ring-opening step in catalysis. The active-site Proton acceptor; for ring-opening step is the H131. Residue E136 is the For ring-opening step of the active site.

It belongs to the glucosamine/galactosamine-6-phosphate isomerase family. NagB subfamily.

It catalyses the reaction alpha-D-glucosamine 6-phosphate + H2O = beta-D-fructose 6-phosphate + NH4(+). It participates in amino-sugar metabolism; N-acetylneuraminate degradation; D-fructose 6-phosphate from N-acetylneuraminate: step 5/5. Functionally, catalyzes the reversible isomerization-deamination of glucosamine 6-phosphate (GlcN6P) to form fructose 6-phosphate (Fru6P) and ammonium ion. This chain is Glucosamine-6-phosphate deaminase, found in Listeria welshimeri serovar 6b (strain ATCC 35897 / DSM 20650 / CCUG 15529 / CIP 8149 / NCTC 11857 / SLCC 5334 / V8).